A 438-amino-acid polypeptide reads, in one-letter code: 3-phosphoshikimate 1-carboxyvinyltransferase (438 aa).

The 3-phosphoshikimate site is built by Lys21, Ser22, and Arg26. Lys21 contributes to the phosphoenolpyruvate binding site. Phosphoenolpyruvate is bound by residues Gly95 and Arg123. 3-phosphoshikimate is bound by residues Ser167, Gln169, Asp315, and Lys342. Gln169 contributes to the phosphoenolpyruvate binding site. Catalysis depends on Asp315, which acts as the Proton acceptor. Phosphoenolpyruvate is bound by residues Arg346 and Arg387.

This sequence belongs to the EPSP synthase family. In terms of assembly, monomer.

Its subcellular location is the cytoplasm. The enzyme catalyses 3-phosphoshikimate + phosphoenolpyruvate = 5-O-(1-carboxyvinyl)-3-phosphoshikimate + phosphate. Its pathway is metabolic intermediate biosynthesis; chorismate biosynthesis; chorismate from D-erythrose 4-phosphate and phosphoenolpyruvate: step 6/7. Its function is as follows. Catalyzes the transfer of the enolpyruvyl moiety of phosphoenolpyruvate (PEP) to the 5-hydroxyl of shikimate-3-phosphate (S3P) to produce enolpyruvyl shikimate-3-phosphate and inorganic phosphate. The chain is 3-phosphoshikimate 1-carboxyvinyltransferase from Coxiella burnetii (strain RSA 331 / Henzerling II).